The following is a 568-amino-acid chain: Periplasmic trehalase (568 aa).

The first 38 residues, Met-1–Ala-38, serve as a signal peptide directing secretion. Substrate contacts are provided by residues Arg-169, Trp-176 to Asp-177, Asn-213, Arg-222 to Gln-224, Arg-294 to Glu-296, and Gly-327. Active-site proton donor/acceptor residues include Asp-329 and Glu-511. Glu-526 lines the substrate pocket.

The protein belongs to the glycosyl hydrolase 37 family.

The protein localises to the periplasm. It catalyses the reaction alpha,alpha-trehalose + H2O = alpha-D-glucose + beta-D-glucose. Provides the cells with the ability to utilize trehalose at high osmolarity by splitting it into glucose molecules that can subsequently be taken up by the phosphotransferase-mediated uptake system. In Xanthomonas campestris pv. campestris (strain B100), this protein is Periplasmic trehalase.